A 765-amino-acid chain; its full sequence is Nucleolar transcription factor 1 (765 aa).

Position 1 is an N-acetylmethionine (Met1). Residues 1-21 form a disordered region; that stretch reads MNGEADCPTDLEMAAPKGQDR. 2 DNA-binding regions (HMG box) span residues 112–180 and 196–264; these read PKKP…ARFR and PEKP…RDYI. Thr201 is subject to Phosphothreonine. Phosphoserine occurs at positions 273, 336, and 364. The segment at residues 298–362 is a DNA-binding region (HMG box 3); sequence TKPPPNSYSL…DYEVELLRFL (65 aa). Basic and acidic residues predominate over residues 370 to 379; it reads QQRVLGEEKM. Residues 370-411 form a disordered region; the sequence is QQRVLGEEKMLNINKKQTTSPASKKPSQEGGKGGSEKPKRPV. Residues Ser389, Ser412, Ser433, Ser435, Ser484, Ser495, Ser546, Ser584, and Ser638 each carry the phosphoserine modification. 3 consecutive DNA-binding regions (HMG box) follow at residues 407-475, 482-549, and 568-634; these read PKRP…GGER, PESP…SEMR, and KKPP…DLWV. The interval 456-487 is disordered; it reads YKAREAALKAQSERKPGGEREDRGKLPESPKR. Basic and acidic residues predominate over residues 457 to 487; the sequence is KAREAALKAQSERKPGGEREDRGKLPESPKR. Residues 546-576 form a disordered region; it reads SEMRAPPAATNSSKKMKFQGEPKKPPMNGYQ. A disordered region spans residues 649 to 765; sequence ISNKRKNMTK…SGDSSDSGSN (117 aa). Polar residues predominate over residues 664 to 674; it reads PKSSRTTLQSK. Residues 677–746 are compositionally biased toward acidic residues; the sequence is SEEDDDEEEE…DDDEDEDNES (70 aa). The segment covering 747 to 765 has biased composition (low complexity); sequence EGSSSSSSSSGDSSDSGSN.

As to quaternary structure, homodimer. Part of Pol I pre-initiation complex (PIC), in which Pol I core assembles with RRN3 and promoter-bound UTBF and SL1/TIF-IB complex. Interacts with TOP2A in the context of Pol I complex. Interacts with TBP. Interacts with TAF1A. Interacts with RASL11A. Binds to IRS1 and PIK3CA. Interacts with DHX33. Interacts with PHF6. Interacts with CEBPA (isoform 1 and isoform 4). Interacts with DDX11. Interacts with NOP53. Interacts with ALKBH2. Post-translationally, phosphorylated and activated by PIK3CA.

The protein resides in the nucleus. It is found in the nucleolus. Functionally, recognizes the ribosomal RNA gene promoter and activates transcription mediated by RNA polymerase I through cooperative interactions with the transcription factor SL1/TIF-IB complex. It binds specifically to the upstream control element. The chain is Nucleolar transcription factor 1 (Ubtf) from Mus musculus (Mouse).